We begin with the raw amino-acid sequence, 396 residues long: 3-amino-4-hydroxybenzoate 2-monooxygenase PtnB3 (396 aa).

FAD is bound by residues Ala-19, 38-39 (EQ), and Arg-112. The Proton acceptor role is filled by Tyr-217. Asp-295 is a binding site for FAD.

It belongs to the 6-hydroxynicotinate 3-monooxygenase family. FAD is required as a cofactor.

It carries out the reaction 3-amino-4-hydroxybenzoate + NADPH + O2 + H(+) = 3-amino-2,4-dihydroxybenzoate + NADP(+) + H2O. The protein operates within antibiotic biosynthesis. Functionally, part of a gene cluster involved in the biosynthesis of thioplatencin (ThioPTN) and platencin (PTN), potent and selective inhibitors of bacterial and mammalian fatty acid synthases. Catalyzes the hydroxylation of 3-amino-4-hydroxybenzoate (3,4-AHBA) to 3-amino-2,4-dihydroxybenzoate (3,2,4-ADHBA). This Streptomyces platensis protein is 3-amino-4-hydroxybenzoate 2-monooxygenase PtnB3.